The chain runs to 240 residues: UDP-2,3-diacylglucosamine hydrolase (240 aa).

Mn(2+) is bound by residues aspartate 8, histidine 10, aspartate 41, asparagine 79, and histidine 114. 79 to 80 (NR) contributes to the substrate binding site. Residues aspartate 122, serine 160, asparagine 164, lysine 167, and histidine 195 each coordinate substrate. Mn(2+)-binding residues include histidine 195 and histidine 197.

The protein belongs to the LpxH family. Requires Mn(2+) as cofactor.

The protein localises to the cell inner membrane. The catalysed reaction is UDP-2-N,3-O-bis[(3R)-3-hydroxytetradecanoyl]-alpha-D-glucosamine + H2O = 2-N,3-O-bis[(3R)-3-hydroxytetradecanoyl]-alpha-D-glucosaminyl 1-phosphate + UMP + 2 H(+). The protein operates within glycolipid biosynthesis; lipid IV(A) biosynthesis; lipid IV(A) from (3R)-3-hydroxytetradecanoyl-[acyl-carrier-protein] and UDP-N-acetyl-alpha-D-glucosamine: step 4/6. Functionally, hydrolyzes the pyrophosphate bond of UDP-2,3-diacylglucosamine to yield 2,3-diacylglucosamine 1-phosphate (lipid X) and UMP by catalyzing the attack of water at the alpha-P atom. Involved in the biosynthesis of lipid A, a phosphorylated glycolipid that anchors the lipopolysaccharide to the outer membrane of the cell. The protein is UDP-2,3-diacylglucosamine hydrolase of Klebsiella pneumoniae subsp. pneumoniae (strain ATCC 700721 / MGH 78578).